The primary structure comprises 324 residues: tRNA dimethylallyltransferase (324 aa).

Residue 17 to 24 (GPTASGKT) coordinates ATP. 19 to 24 (TASGKT) contributes to the substrate binding site. Interaction with substrate tRNA regions lie at residues 42–45 (DSAL), 166–170 (QRIQR), and 251–256 (RCVGYR).

It belongs to the IPP transferase family. Monomer. Requires Mg(2+) as cofactor.

The enzyme catalyses adenosine(37) in tRNA + dimethylallyl diphosphate = N(6)-dimethylallyladenosine(37) in tRNA + diphosphate. In terms of biological role, catalyzes the transfer of a dimethylallyl group onto the adenine at position 37 in tRNAs that read codons beginning with uridine, leading to the formation of N6-(dimethylallyl)adenosine (i(6)A). This is tRNA dimethylallyltransferase from Burkholderia pseudomallei (strain 668).